Here is a 308-residue protein sequence, read N- to C-terminus: Aspartate carbamoyltransferase catalytic subunit (308 aa).

Residues Arg-55 and Thr-56 each coordinate carbamoyl phosphate. Residue Lys-83 participates in L-aspartate binding. Residues Arg-105, His-133, and Gln-136 each contribute to the carbamoyl phosphate site. 2 residues coordinate L-aspartate: Arg-166 and Arg-220. Positions 261 and 262 each coordinate carbamoyl phosphate.

The protein belongs to the aspartate/ornithine carbamoyltransferase superfamily. ATCase family. In terms of assembly, heterododecamer (2C3:3R2) of six catalytic PyrB chains organized as two trimers (C3), and six regulatory PyrI chains organized as three dimers (R2).

The catalysed reaction is carbamoyl phosphate + L-aspartate = N-carbamoyl-L-aspartate + phosphate + H(+). It participates in pyrimidine metabolism; UMP biosynthesis via de novo pathway; (S)-dihydroorotate from bicarbonate: step 2/3. In terms of biological role, catalyzes the condensation of carbamoyl phosphate and aspartate to form carbamoyl aspartate and inorganic phosphate, the committed step in the de novo pyrimidine nucleotide biosynthesis pathway. This is Aspartate carbamoyltransferase catalytic subunit from Chlorobium phaeobacteroides (strain DSM 266 / SMG 266 / 2430).